A 462-amino-acid chain; its full sequence is Argininosuccinate lyase (462 aa).

The protein belongs to the lyase 1 family. Argininosuccinate lyase subfamily.

It is found in the cytoplasm. The enzyme catalyses 2-(N(omega)-L-arginino)succinate = fumarate + L-arginine. Its pathway is amino-acid biosynthesis; L-arginine biosynthesis; L-arginine from L-ornithine and carbamoyl phosphate: step 3/3. This Gloeothece citriformis (strain PCC 7424) (Cyanothece sp. (strain PCC 7424)) protein is Argininosuccinate lyase.